A 356-amino-acid polypeptide reads, in one-letter code: Alanine racemase (356 aa).

Residue lysine 35 is the Proton acceptor; specific for D-alanine of the active site. Position 35 is an N6-(pyridoxal phosphate)lysine (lysine 35). Arginine 130 serves as a coordination point for substrate. The active-site Proton acceptor; specific for L-alanine is the tyrosine 253. Methionine 301 contacts substrate.

The protein belongs to the alanine racemase family. Pyridoxal 5'-phosphate is required as a cofactor.

The enzyme catalyses L-alanine = D-alanine. It functions in the pathway amino-acid biosynthesis; D-alanine biosynthesis; D-alanine from L-alanine: step 1/1. Its function is as follows. Catalyzes the interconversion of L-alanine and D-alanine. May also act on other amino acids. This Burkholderia mallei (strain NCTC 10229) protein is Alanine racemase (alr).